Consider the following 583-residue polypeptide: CTP synthase (583 aa).

Residues 1-278 are amidoligase domain; the sequence is MRRHPQTATK…DAFVVRRLNL (278 aa). Residue serine 20 participates in CTP binding. Serine 20 serves as a coordination point for UTP. ATP is bound by residues 21 to 26 and aspartate 78; that span reads SLGKGL. The Mg(2+) site is built by aspartate 78 and glutamate 152. Residues 159 to 161, 199 to 204, and lysine 235 each bind CTP; these read DIE and KTKPTQ. Residues 199–204 and lysine 235 each bind UTP; that span reads KTKPTQ. The Glutamine amidotransferase type-1 domain maps to 303–551; it reads RIALVGKYVE…VKAAIDYKEG (249 aa). L-glutamine is bound at residue glycine 366. Cysteine 393 acts as the Nucleophile; for glutamine hydrolysis in catalysis. L-glutamine is bound by residues 394 to 397, glutamate 416, and arginine 477; that span reads LGLQ. Residues histidine 524 and glutamate 526 contribute to the active site. Positions 559-583 are disordered; that stretch reads PERVSNGAERRDQVGQSIPEPANRG.

The protein belongs to the CTP synthase family. Homotetramer.

The enzyme catalyses UTP + L-glutamine + ATP + H2O = CTP + L-glutamate + ADP + phosphate + 2 H(+). It carries out the reaction L-glutamine + H2O = L-glutamate + NH4(+). The catalysed reaction is UTP + NH4(+) + ATP = CTP + ADP + phosphate + 2 H(+). The protein operates within pyrimidine metabolism; CTP biosynthesis via de novo pathway; CTP from UDP: step 2/2. Allosterically activated by GTP, when glutamine is the substrate; GTP has no effect on the reaction when ammonia is the substrate. The allosteric effector GTP functions by stabilizing the protein conformation that binds the tetrahedral intermediate(s) formed during glutamine hydrolysis. Inhibited by the product CTP, via allosteric rather than competitive inhibition. Functionally, catalyzes the ATP-dependent amination of UTP to CTP with either L-glutamine or ammonia as the source of nitrogen. Regulates intracellular CTP levels through interactions with the four ribonucleotide triphosphates. This is CTP synthase from Mycobacterium ulcerans (strain Agy99).